Reading from the N-terminus, the 168-residue chain is Coiled-coil domain-containing protein 200 (168 aa).

A coiled-coil region spans residues 16 to 50 (LDRRRWLMAQQQQELQQKEQELKNHQEEEQQSEEK). The interval 23–168 (MAQQQQELQQ…LKSTNYIQQW (146 aa)) is disordered. Residues 31–52 (QQKEQELKNHQEEEQQSEEKLQ) are compositionally biased toward basic and acidic residues. Over residues 70 to 82 (SQEQPQPSQQQPS) the composition is skewed to low complexity. Pro residues-rich tracts occupy residues 83-94 (VQPPSQPPPQPS) and 104-117 (GPQPPQPQPPPQPT). Composition is skewed to polar residues over residues 124-138 (RCTQHTSKCNLQDSQ) and 145-168 (PCQSSPIRNTGYSQLKSTNYIQQW).

The protein is Coiled-coil domain-containing protein 200 of Homo sapiens (Human).